Here is a 777-residue protein sequence, read N- to C-terminus: Probable aconitate hydratase, mitochondrial (777 aa).

The N-terminal 26 residues, 1 to 26 (MNSLLRLSHLAGPAHYRALHSSSSIW), are a transit peptide targeting the mitochondrion. Substrate-binding positions include Q96 and 189–191 (DSH). The [4Fe-4S] cluster site is built by C382, C445, and C448. R471 and R476 together coordinate substrate. A disordered region spans residues 534 to 555 (YDPGEDTFQAPSGSGQVDVSPS). Residues 542-555 (QAPSGSGQVDVSPS) show a composition bias toward polar residues. Substrate contacts are provided by residues R601 and 664 to 665 (SR).

Belongs to the aconitase/IPM isomerase family. Monomer. It depends on [4Fe-4S] cluster as a cofactor.

The protein resides in the mitochondrion. The catalysed reaction is citrate = D-threo-isocitrate. The protein operates within carbohydrate metabolism; tricarboxylic acid cycle; isocitrate from oxaloacetate: step 2/2. Its function is as follows. Catalyzes the isomerization of citrate to isocitrate via cis-aconitate. The chain is Probable aconitate hydratase, mitochondrial from Caenorhabditis elegans.